Here is a 119-residue protein sequence, read N- to C-terminus: MAESSGPTAGGGATSSTVTTESDTQPEHRSLTLKLRKRKPDKKVEWTCDTVDNENLGRRSSKCCCIYEKPRPFGESSSESEDEDDCCESAHCIRGHKKATSGSKETPSSHHDKTGSMQH.

The interval 1–42 (MAESSGPTAGGGATSSTVTTESDTQPEHRSLTLKLRKRKPDK) is disordered. 2 atypical RING finger domain regions span residues 55–65 (NLGRRSSKCCC) and 87–96 (CESAHCIRGH). The disordered stretch occupies residues 96–119 (HKKATSGSKETPSSHHDKTGSMQH). Over residues 107–119 (PSSHHDKTGSMQH) the composition is skewed to basic and acidic residues.

It catalyses the reaction S-ubiquitinyl-[E2 ubiquitin-conjugating enzyme]-L-cysteine + [acceptor protein]-L-lysine = [E2 ubiquitin-conjugating enzyme]-L-cysteine + N(6)-ubiquitinyl-[acceptor protein]-L-lysine.. The protein operates within protein modification; protein ubiquitination. In terms of biological role, atypical E3 ubiquitin-protein ligase which ubiquitinates TLR2 at 'Lys-754' leading to its degradation by the proteasome. Inhibitor of protein phosphatase 1. In Xenopus tropicalis (Western clawed frog), this protein is E3 ubiquitin-protein ligase PPP1R11 (ppp1r11).